A 113-amino-acid chain; its full sequence is Large ribosomal subunit protein bL19 (113 aa).

This sequence belongs to the bacterial ribosomal protein bL19 family.

Functionally, this protein is located at the 30S-50S ribosomal subunit interface and may play a role in the structure and function of the aminoacyl-tRNA binding site. The protein is Large ribosomal subunit protein bL19 of Mycobacterium avium (strain 104).